A 122-amino-acid polypeptide reads, in one-letter code: Large ribosomal subunit protein uL18 (122 aa).

Residues 1–24 (MLKKADKNANRLQRHKRVRRKISG) form a disordered region. Over residues 12 to 22 (LQRHKRVRRKI) the composition is skewed to basic residues.

The protein belongs to the universal ribosomal protein uL18 family. Part of the 50S ribosomal subunit; part of the 5S rRNA/L5/L18/L25 subcomplex. Contacts the 5S and 23S rRNAs.

In terms of biological role, this is one of the proteins that bind and probably mediate the attachment of the 5S RNA into the large ribosomal subunit, where it forms part of the central protuberance. This Clostridioides difficile (strain 630) (Peptoclostridium difficile) protein is Large ribosomal subunit protein uL18.